A 284-amino-acid chain; its full sequence is MYVVSTKQMLNNAQRGGYAVPAFNIHNLETMQVVVETAANLHAPVIIAGTPGTFTHAGIENLLALVSAMAKQYHHLLAIHLDHHTKFDDIAQKVRSGVRSVMIDASHLPFAQNISRVKEVVDFCHRFDVSVEAELGQLGGQEDDVQVNEADALYTNPVQAREFAEATGIDSLAVAIGTAHGMYASAPALDFSRLENIRQWVNLPLVLHGASGLSTKDIQQTIKLGICKINVATELKNSFSQALKNYLTEHPEATDPRDYLQSAKSAMRDVVSKVIADCGCEGRA.

The active-site Proton donor is the D82. H83 and H180 together coordinate Zn(2+). G181 is a dihydroxyacetone phosphate binding site. H208 is a Zn(2+) binding site. Dihydroxyacetone phosphate is bound by residues 209–211 (GAS) and 230–233 (NVAT).

It belongs to the class II fructose-bisphosphate aldolase family. TagBP aldolase GatY subfamily. Forms a complex with GatZ. Zn(2+) serves as cofactor.

It carries out the reaction D-tagatofuranose 1,6-bisphosphate = D-glyceraldehyde 3-phosphate + dihydroxyacetone phosphate. It functions in the pathway carbohydrate metabolism; D-tagatose 6-phosphate degradation; D-glyceraldehyde 3-phosphate and glycerone phosphate from D-tagatose 6-phosphate: step 2/2. Its function is as follows. Catalytic subunit of the tagatose-1,6-bisphosphate aldolase GatYZ, which catalyzes the reversible aldol condensation of dihydroxyacetone phosphate (DHAP or glycerone-phosphate) with glyceraldehyde 3-phosphate (G3P) to produce tagatose 1,6-bisphosphate (TBP). Requires GatZ subunit for full activity and stability. Is involved in the catabolism of galactitol. In Shigella dysenteriae serotype 1 (strain Sd197), this protein is D-tagatose-1,6-bisphosphate aldolase subunit GatY.